We begin with the raw amino-acid sequence, 1134 residues long: Tetrathionate reductase subunit A (1134 aa).

Residues 1-31 constitute a signal peptide (tat-type signal); that stretch reads MQLSRRDFIKGLVAVGSASVFLAGYSETVDR. In terms of domain architecture, 4Fe-4S Mo/W bis-MGD-type spans 46-133; that stretch reads GRIVHSACLG…DGIHYLYDPY (88 aa). Residues cysteine 53, cysteine 56, cysteine 60, and cysteine 119 each contribute to the [4Fe-4S] cluster site.

It belongs to the prokaryotic molybdopterin-containing oxidoreductase family. As to quaternary structure, probably composed of three subunits: TtrA, TtrB and TtrC. Precursor interacts with TtrD. Requires [4Fe-4S] cluster as cofactor. Mo-bis(molybdopterin guanine dinucleotide) serves as cofactor. Exported by the Tat system. The position of the signal peptide cleavage has not been experimentally proven.

Its subcellular location is the cell membrane. In terms of biological role, part of a membrane-bound tetrathionate reductase that catalyzes the reduction of tetrathionate to thiosulfate. TtrA is the catalytic subunit. This Archaeoglobus fulgidus (strain ATCC 49558 / DSM 4304 / JCM 9628 / NBRC 100126 / VC-16) protein is Tetrathionate reductase subunit A (ttrA).